The chain runs to 247 residues: E3 ubiquitin-protein ligase RNF182 (247 aa).

The RING-type zinc-finger motif lies at cysteine 20–arginine 68. 2 consecutive transmembrane segments (helical) span residues valine 184–leucine 204 and leucine 211–phenylalanine 231.

As to quaternary structure, interacts with ATP6V0C.

It is found in the membrane. Its subcellular location is the cytoplasm. It catalyses the reaction S-ubiquitinyl-[E2 ubiquitin-conjugating enzyme]-L-cysteine + [acceptor protein]-L-lysine = [E2 ubiquitin-conjugating enzyme]-L-cysteine + N(6)-ubiquitinyl-[acceptor protein]-L-lysine.. It participates in protein modification; protein ubiquitination. In terms of biological role, E3 ubiquitin-protein ligase that mediates the ubiquitination of ATP6V0C and targets it to degradation via the ubiquitin-proteasome pathway. Also plays a role in the inhibition of TLR-triggered innate immune response by mediating 'Lys'-48-linked ubiquitination and subsequent degradation of NF-kappa-B component RELA. The protein is E3 ubiquitin-protein ligase RNF182 (RNF182) of Ailuropoda melanoleuca (Giant panda).